The sequence spans 346 residues: NADH-ubiquinone oxidoreductase chain 2 (346 aa).

Helical transmembrane passes span 25-45, 56-76, 94-114, 122-142, 148-168, 178-198, 200-220, 240-260, 278-298, and 325-345; these read NLLL…PLLA, ATKY…VIIL, LLNM…FHYW, IPLH…LSIL, LLNP…GAWG, IMAY…PYNP, LTLL…ITLM, ILTM…LTGF, LSTL…RLIY, and FILP…SQLI.

The protein belongs to the complex I subunit 2 family. As to quaternary structure, core subunit of respiratory chain NADH dehydrogenase (Complex I) which is composed of 45 different subunits. Interacts with TMEM242.

Its subcellular location is the mitochondrion inner membrane. The enzyme catalyses a ubiquinone + NADH + 5 H(+)(in) = a ubiquinol + NAD(+) + 4 H(+)(out). Functionally, core subunit of the mitochondrial membrane respiratory chain NADH dehydrogenase (Complex I) which catalyzes electron transfer from NADH through the respiratory chain, using ubiquinone as an electron acceptor. Essential for the catalytic activity and assembly of complex I. This is NADH-ubiquinone oxidoreductase chain 2 from Rattus norvegicus (Rat).